We begin with the raw amino-acid sequence, 634 residues long: Chaperone protein HtpG (634 aa).

The segment at 1-344 (MSETVSHNKE…SNDLPLNVSR (344 aa)) is a; substrate-binding. A b region spans residues 345–561 (EILQDNKVTQ…DFEMGTQMAK (217 aa)). Positions 562–634 (LLEAAGQAVP…GAINKLLTKV (73 aa)) are c.

This sequence belongs to the heat shock protein 90 family. In terms of assembly, homodimer.

The protein resides in the cytoplasm. In terms of biological role, molecular chaperone. Has ATPase activity. The polypeptide is Chaperone protein HtpG (Vibrio campbellii (strain ATCC BAA-1116)).